The chain runs to 1211 residues: DNA-directed RNA polymerase subunit beta' (1211 aa).

Residues cysteine 60, cysteine 62, cysteine 75, and cysteine 78 each coordinate Zn(2+). The Mg(2+) site is built by aspartate 449, aspartate 451, and aspartate 453. Zn(2+) is bound by residues cysteine 818, cysteine 892, cysteine 899, and cysteine 902.

This sequence belongs to the RNA polymerase beta' chain family. As to quaternary structure, the RNAP catalytic core consists of 2 alpha, 1 beta, 1 beta' and 1 omega subunit. When a sigma factor is associated with the core the holoenzyme is formed, which can initiate transcription. Requires Mg(2+) as cofactor. It depends on Zn(2+) as a cofactor.

The enzyme catalyses RNA(n) + a ribonucleoside 5'-triphosphate = RNA(n+1) + diphosphate. In terms of biological role, DNA-dependent RNA polymerase catalyzes the transcription of DNA into RNA using the four ribonucleoside triphosphates as substrates. The polypeptide is DNA-directed RNA polymerase subunit beta' (Limosilactobacillus reuteri (strain DSM 20016) (Lactobacillus reuteri)).